We begin with the raw amino-acid sequence, 278 residues long: Dehydrogenase/reductase SDR family member 4 (278 aa).

NADP(+) is bound at residue 36-60 (LVTASTDGIGFAIARRLAQDGAHVV). The residue at position 92 (lysine 92) is an N6-acetyllysine; alternate. Position 92 is an N6-succinyllysine; alternate (lysine 92). Position 105 is an N6-acetyllysine (lysine 105). Residue serine 169 participates in substrate binding. Tyrosine 182 functions as the Proton acceptor in the catalytic mechanism. Lysine 186 contributes to the NADP(+) binding site. Position 216 is an N6-acetyllysine; alternate (lysine 216). Residue lysine 216 is modified to N6-succinyllysine; alternate. Residue serine 220 is modified to Phosphoserine. N6-succinyllysine occurs at positions 227 and 234. A Peroxisomal targeting signal motif is present at residues 276–278 (SRL).

Belongs to the short-chain dehydrogenases/reductases (SDR) family. Homotetramer.

It is found in the peroxisome. The enzyme catalyses a secondary alcohol + NADP(+) = a ketone + NADPH + H(+). The catalysed reaction is 3beta-hydroxy-5beta-pregnane-20-one + NADP(+) = 5beta-pregnan-3,20-dione + NADPH + H(+). It carries out the reaction 5beta-dihydrotestosterone + NADPH + H(+) = 5beta-androstane-3beta,17beta-diol + NADP(+). It catalyses the reaction 5beta-androstane-3,17-dione + NADPH + H(+) = 3beta-hydroxy-5beta-androstane-17-one + NADP(+). The enzyme catalyses isatin + NADPH + H(+) = 3-hydroxyindolin-2-one + NADP(+). The catalysed reaction is lithocholate + NADP(+) = 3-oxo-5beta-cholan-24-oate + NADPH + H(+). It carries out the reaction 3-oxo-5beta-cholan-24-oate + NADPH + H(+) = isolithocholate + NADP(+). NADPH-dependent oxidoreductase which catalyzes the reduction of a variety of compounds bearing carbonyl groups including ketosteroids, alpha-dicarbonyl compounds, aldehydes, aromatic ketones and quinones. Reduces 3-ketosteroids and benzil into 3beta-hydroxysteroids and R-benzoin, respectively, in contrast to the stereoselectivity of non-primate DHRS4s which produce 3alpha-hydroxysteroids and S-benzoin. Diplays low activity toward all-trans-retinal and no activity toward 9-cis-retinal as compared to non-primate mammals. In the reverse reaction, catalyze the NAD-dependent oxidation of 3beta-hydroxysteroids and alcohol, but with much lower efficiency. Involved in the metabolism of 3beta-hydroxysteroids, isatin and xenobiotic carbonyl compounds. In Pongo abelii (Sumatran orangutan), this protein is Dehydrogenase/reductase SDR family member 4 (DHRS4).